The primary structure comprises 501 residues: NAD(P)H-quinone oxidoreductase chain 4, chloroplastic (501 aa).

The next 14 helical transmembrane spans lie at 5–25, 38–58, 88–108, 114–131, 135–155, 168–188, 209–229, 243–263, 273–293, 306–326, 331–351, 387–407, 417–437, and 464–484; these read FPWL…IFFL, TCIC…HFQL, IGPI…AWPV, LFYL…GLFS, LLLF…LLSM, FILY…GMGL, ALEI…SPII, HYST…YGLI, AHSL…IYAA, IACS…SITD, GAIL…FLSG, LALP…GIIT, ILIT…LLSM, and FVSI…DCVF.

It belongs to the complex I subunit 4 family.

It localises to the plastid. It is found in the chloroplast thylakoid membrane. The catalysed reaction is a plastoquinone + NADH + (n+1) H(+)(in) = a plastoquinol + NAD(+) + n H(+)(out). It catalyses the reaction a plastoquinone + NADPH + (n+1) H(+)(in) = a plastoquinol + NADP(+) + n H(+)(out). The protein is NAD(P)H-quinone oxidoreductase chain 4, chloroplastic of Dioscorea elephantipes (Elephant's foot yam).